A 343-amino-acid chain; its full sequence is Fructose-1,6-bisphosphatase class 1 (343 aa).

Mg(2+) contacts are provided by Glu90, Asp109, Leu111, and Asp112. Residues 112 to 115 (DGSS) and Asn199 contribute to the substrate site. Glu271 provides a ligand contact to Mg(2+).

The protein belongs to the FBPase class 1 family. In terms of assembly, homotetramer. Mg(2+) serves as cofactor.

It localises to the cytoplasm. It carries out the reaction beta-D-fructose 1,6-bisphosphate + H2O = beta-D-fructose 6-phosphate + phosphate. It participates in carbohydrate biosynthesis; Calvin cycle. This chain is Fructose-1,6-bisphosphatase class 1, found in Rhodopseudomonas palustris (strain HaA2).